The chain runs to 1126 residues: [F-actin]-monooxygenase mical2 (1126 aa).

The interval 2-494 is monooxygenase domain; the sequence is GENGDDKHGR…KHLFITNELQ (493 aa). FAD-binding positions include C97, 116 to 118, 123 to 125, F183, Y299, and D399; these read EKR and RNN. The Calponin-homology (CH) domain maps to 516–619; the sequence is DVRPNKLLIW…MVLYLSKFYE (104 aa). Positions 659–680 match the Nuclear localization signal motif; the sequence is RKRVPKDEKTSDDSDLNKRRKT. 2 disordered regions span residues 748–830 and 892–935; these read AVTA…SLSS and PSLG…SGMS. Over residues 792–803 the composition is skewed to pro residues; sequence VRPPVQPRPGPA. A compositionally biased stretch (basic and acidic residues) spans 805 to 824; that stretch reads PTRELRVVERAQSHPDDLGR. Residues 918 to 932 show a composition bias toward low complexity; the sequence is SSSDSSPSSAPSRKS. An LIM zinc-binding domain is found at 1001–1063; sequence DTCYFCKRRV…QPHFMHSVTK (63 aa). Zn(2+) is bound by residues C1003, C1006, H1024, C1027, C1030, C1033, C1053, and H1056.

This sequence belongs to the Mical family. Requires FAD as cofactor.

It localises to the nucleus. The protein localises to the cytoplasm. It catalyses the reaction L-methionyl-[F-actin] + NADPH + O2 + H(+) = L-methionyl-(R)-S-oxide-[F-actin] + NADP(+) + H2O. Its function is as follows. Nuclear monooxygenase that promotes depolymerization of F-actin by mediating oxidation of specific methionine residues on actin and regulates the srf signaling. Acts by modifying nuclear actin subunits through the addition of oxygen to form methionine-sulfoxide, leading to promote actin filament severing and prevent repolymerization. Acts as a key regulator of the srf signaling pathway elicited by nerve growth factor and serum: mediates oxidation and subsequent depolymerization of nuclear actin, leading to increase mkl1/mrtf-a presence in the nucleus and promote srf:mkl1/mrtf-a-dependent gene transcription. In Xenopus tropicalis (Western clawed frog), this protein is [F-actin]-monooxygenase mical2.